The primary structure comprises 445 residues: Phosphoglucosamine mutase (445 aa).

Catalysis depends on Ser102, which acts as the Phosphoserine intermediate. Residues Ser102, Asp241, Asp243, and Asp245 each contribute to the Mg(2+) site. Phosphoserine is present on Ser102.

Belongs to the phosphohexose mutase family. Mg(2+) serves as cofactor. Post-translationally, activated by phosphorylation.

It catalyses the reaction alpha-D-glucosamine 1-phosphate = D-glucosamine 6-phosphate. Its function is as follows. Catalyzes the conversion of glucosamine-6-phosphate to glucosamine-1-phosphate. The polypeptide is Phosphoglucosamine mutase (Acinetobacter baumannii (strain SDF)).